The chain runs to 82 residues: MEVKTLANIKSAIKRAELNVKANEKNSAQKSAMRTAIKAFEANPSEELFRAASSSIDKAESKGLIHKNKASRDKARLAAKLG.

It belongs to the bacterial ribosomal protein bS20 family.

Functionally, binds directly to 16S ribosomal RNA. The chain is Small ribosomal subunit protein bS20 from Streptococcus pyogenes serotype M12 (strain MGAS2096).